We begin with the raw amino-acid sequence, 37 residues long: Omega/M-ectatotoxin-Et1a subunit A (37 aa).

A disulfide bridge links Cys12 with Cys34.

Belongs to the ectatomin family. Ectatomin-Et subfamily. Heterodimer of an A and a B chain; disulfide-linked. Expressed by the venom gland.

The protein resides in the secreted. It is found in the target cell membrane. In terms of biological role, algogenic for animals, human and insects. At high concentrations (0.5-1 uM), it acts as a pore-forming protein that forms nonselective cation channels both in cell and artificial membranes. It is weakly selective for cation over anions channel conductance is identical in both directions. At lower concentrations (1-10 nM), this heterodimer inhibits cardiac L-type calcium currents in isolated rat cardiac ventricular myocytes. This chain is Omega/M-ectatotoxin-Et1a subunit A, found in Ectatomma tuberculatum (Selva ant).